Consider the following 72-residue polypeptide: Disintegrin crotatroxin (72 aa).

The region spanning 1 to 72 (AGEECDCGSP…ADCPRNGLYG (72 aa)) is the Disintegrin domain. 6 disulfide bridges follow: C5–C20, C7–C15, C14–C37, C28–C34, C33–C58, and C46–C65. The short motif at 50-52 (RGD) is the Cell attachment site element.

This sequence belongs to the venom metalloproteinase (M12B) family. P-II subfamily. P-IIa sub-subfamily. In terms of assembly, monomer. Expressed by the venom gland.

It localises to the secreted. Its function is as follows. Inhibits fibrinogen interaction with platelets. Acts by binding to the alpha-IIb/beta-3 (ITGA2B/ITGB3) on the platelet surface and inhibits aggregation induced by ADP, thrombin, platelet-activating factor and collagen. Functionally, inhibits ADP-induced platelet aggregation (IC(50) = 17.5nM), cancer cell migration in vitro, and experimental lung tumor colonization of cancer cells. This chain is Disintegrin crotatroxin, found in Crotalus atrox (Western diamondback rattlesnake).